The primary structure comprises 279 residues: Formamidopyrimidine-DNA glycosylase (279 aa).

Proline 2 serves as the catalytic Schiff-base intermediate with DNA. Glutamate 3 functions as the Proton donor in the catalytic mechanism. Lysine 57 (proton donor; for beta-elimination activity) is an active-site residue. Residues histidine 90, arginine 109, and arginine 151 each contribute to the DNA site. Residues 236–270 (FVYGRTGQPCRVCQTPIAVLRLGQRSTFYCPACQQ) form an FPG-type zinc finger. Arginine 260 acts as the Proton donor; for delta-elimination activity in catalysis.

The protein belongs to the FPG family. Monomer. The cofactor is Zn(2+).

The catalysed reaction is Hydrolysis of DNA containing ring-opened 7-methylguanine residues, releasing 2,6-diamino-4-hydroxy-5-(N-methyl)formamidopyrimidine.. It catalyses the reaction 2'-deoxyribonucleotide-(2'-deoxyribose 5'-phosphate)-2'-deoxyribonucleotide-DNA = a 3'-end 2'-deoxyribonucleotide-(2,3-dehydro-2,3-deoxyribose 5'-phosphate)-DNA + a 5'-end 5'-phospho-2'-deoxyribonucleoside-DNA + H(+). Functionally, involved in base excision repair of DNA damaged by oxidation or by mutagenic agents. Acts as a DNA glycosylase that recognizes and removes damaged bases. Has a preference for oxidized purines, such as 7,8-dihydro-8-oxoguanine (8-oxoG). Has AP (apurinic/apyrimidinic) lyase activity and introduces nicks in the DNA strand. Cleaves the DNA backbone by beta-delta elimination to generate a single-strand break at the site of the removed base with both 3'- and 5'-phosphates. The protein is Formamidopyrimidine-DNA glycosylase of Methylobacillus flagellatus (strain ATCC 51484 / DSM 6875 / VKM B-1610 / KT).